The following is a 251-amino-acid chain: Triosephosphate isomerase (251 aa).

9 to 11 (NWK) lines the substrate pocket. The Electrophile role is filled by His-95. Catalysis depends on Glu-167, which acts as the Proton acceptor. Substrate is bound by residues Gly-173, Ser-213, and 234–235 (GG). Ser-213 carries the phosphoserine modification.

Belongs to the triosephosphate isomerase family. Homodimer.

It is found in the cytoplasm. The enzyme catalyses D-glyceraldehyde 3-phosphate = dihydroxyacetone phosphate. It functions in the pathway carbohydrate biosynthesis; gluconeogenesis. Its pathway is carbohydrate degradation; glycolysis; D-glyceraldehyde 3-phosphate from glycerone phosphate: step 1/1. Involved in the gluconeogenesis. Catalyzes stereospecifically the conversion of dihydroxyacetone phosphate (DHAP) to D-glyceraldehyde-3-phosphate (G3P). This is Triosephosphate isomerase from Bacillus anthracis.